The primary structure comprises 329 residues: MKAAITATAKYLPQSVLSNHDLEQMLETNDEWIRSRTGIGERRIMNDPSKATAYMCGEVALQLLEARKMKPEEIEVIIVATMTPDMLFPATACFVQGIIGATNAWAFDINAACSGFLFALSTASRLIESGAHKKVMVIGGDKMSSVIDYTNRSTAILFGDGAAGVILEPSTNDNYGILDARLYSDGASGTSHLLMAAGGSLNPATHETVDKRMHFLHQDGKQVFKSAVTSMADVAAEIMTRNNLSAEDISFLVPHQANQRIINATAERMGLDQEKVYSNVARYGNTTAGTIPICLAELNEQEQLKTGSNLVLVSFGAGYTWGGIYIKWQ.

Catalysis depends on residues cysteine 113 and histidine 255. The tract at residues 256–260 (QANQR) is ACP-binding. Residue asparagine 285 is part of the active site.

The protein belongs to the thiolase-like superfamily. FabH family. As to quaternary structure, homodimer.

It is found in the cytoplasm. The enzyme catalyses malonyl-[ACP] + acetyl-CoA + H(+) = 3-oxobutanoyl-[ACP] + CO2 + CoA. Its pathway is lipid metabolism; fatty acid biosynthesis. Catalyzes the condensation reaction of fatty acid synthesis by the addition to an acyl acceptor of two carbons from malonyl-ACP. Catalyzes the first condensation reaction which initiates fatty acid synthesis and may therefore play a role in governing the total rate of fatty acid production. Possesses both acetoacetyl-ACP synthase and acetyl transacylase activities. Its substrate specificity determines the biosynthesis of branched-chain and/or straight-chain of fatty acids. The sequence is that of Beta-ketoacyl-[acyl-carrier-protein] synthase III from Chlorobium phaeobacteroides (strain DSM 266 / SMG 266 / 2430).